A 1576-amino-acid chain; its full sequence is MGSTTFENPTRIEILGKEDIIVDFDIWRNFVAEDLLSDLPSSTYVLITDTNLSPLYVPAFQQSFEALAAKSSSTPRLLTYEIPPGENSKSRETKAEIEDWMLSHQCTRDSVIIALGGGVIGDMIGYVAATFMRGVRFVQVPTTLLAMVDSSIGGKTAIDTPLGKNLVGAFWQPQRIYIDLRFLETLPVREFINGMAEVVKTAAIWDEAEFSALEDNANLIMTTIRAKNTDCSTRLGPIRDILKRIVLGSAKTKADVVSADEREGGLRNILNFGHSIGHAFEAILTPQVLHGEAVAIGMVKEAELARHLGVLKPGAVARLVKCIASYGLPTSLADKRIQKLTAGKLCPVDVLLEKMGVDKKNDGRKKKIVLLSAIGKTYEPKASVVEDRSIRVVLSDSVEVRPSVPETLNVEVTPPGSKSISNRALVLAALGTGPCRIKNLLHSDDVEFMLTSIGKLGGATYAWEDAGEVLCVQGKGGDLHASPTELYIGNAGTASRFLTTVVSLCKPSASTKSTILTGNARMKVRPIGPLVDSLRANGVDIEYLEKEHSLPLNVAASGGFTGGDINLAATVSSQYVSSLLMCAPYAKNPVTLRLVGGKPISQLYIDMTTAMMAAFGIHVVRSQTEEHTYHIPQGVYKNPEEYVVESDASSATYPLAVAAISGTTCTIPNIGCKSIQGDARFAIDVLKPMGCKVVQTDYSTTVTGPPIGSLQAIEEVDMEPMTDAFLTASVLGAVAKGTTKIRGIANQRVKECNRIKAMKDELAKFGVTCRELEDGIEVDGVPIKDLKHPAEGIHCYDDHRVAMSFSVLSVAASQPVLIEERECVGKTWPGWWDILSKSFQVELAGKEVKATHSKKIGIPALPDKSIFIIGMRGAGKTTAGAWAAKILGRPYKDLDVELERISGMSIPDMVRSKGWDFFRAAELDLLKHCLTDQPEKHVFACGGGVVEMPEARELLINFHKSGGIVLLVHRDTEQVMDYLRIDKTRPAYVEDMMGVYSRRKPWFNECSNFQYHSKGSGASALSVAEQDFARFLHHISGKSLHFDEMRNKPQSFFVSLTMPDISGAAYILPSVAVGSDAVEVRVDLLEDPSSTNGIPGTDFLSVQIAHLRSVVHLPVIFTVRTVSQGGRFPDAAHEEALKLYKLAVKMGIEYIDLEIAFPDELLQEVTEAKGFSRIIASHHDPQGTLSWKNGGWFQHYNRALQYGDIIKLVGSAKSIEDNFALAKFKKTMAAAHDTPLIAINMGVTGKLSRVLNGFMTPVSHPSLPFKAAPGQLSAAEIRSTLSTLGEIEPKSFYLFGTPISQSRSPALHNTLFKQTGLPHRYSRLETDRVADVQDVIRAPDFGGASVTIPLKLDIIPLLDSVTDAVKVIGAVNTIIPTPDNPPRLVGENTDWLGMTHSLMSASHTPSPVDSPSPALVIGAGGTARAAIYALHSLGHSPIYMVARTPSKLDTLINSFPSSFNIIPLPSTTSATELTTPPAVAISTIPADRPIESNMRETLAVLLRHEKKDEGKQRTLLEMAYKPSQTPLMRMAEDAGWVAIPGLEVLSAQGWYQFQKWTSIQPLYVDARAAVMGDSTA.

The tract at residues 1–387 is 3-dehydroquinate synthase; the sequence is MGSTTFENPT…YEPKASVVED (387 aa). NAD(+)-binding positions include 49–51, 86–89, 117–119, and Asp122; these read DTN, ENSK, and GGV. Arg133 contributes to the 7-phospho-2-dehydro-3-deoxy-D-arabino-heptonate binding site. 142–143 contributes to the NAD(+) binding site; sequence TT. The 7-phospho-2-dehydro-3-deoxy-D-arabino-heptonate site is built by Asp149 and Lys155. Lys164 contributes to the NAD(+) binding site. Asn165 is a 7-phospho-2-dehydro-3-deoxy-D-arabino-heptonate binding site. Residues 182–185 and Asn193 contribute to the NAD(+) site; that span reads FLET. Residue Glu197 participates in Zn(2+) binding. 7-phospho-2-dehydro-3-deoxy-D-arabino-heptonate contacts are provided by residues 197 to 200 and Lys253; that span reads EVVK. The active-site Proton acceptor; for 3-dehydroquinate synthase activity is the Glu263. 7-phospho-2-dehydro-3-deoxy-D-arabino-heptonate contacts are provided by residues 267-271 and His274; that span reads RNILN. A Zn(2+)-binding site is contributed by His274. The Proton acceptor; for 3-dehydroquinate synthase activity role is filled by His278. 7-phospho-2-dehydro-3-deoxy-D-arabino-heptonate is bound by residues His290 and Lys359. His290 contributes to the Zn(2+) binding site. An EPSP synthase region spans residues 400–841; the sequence is VRPSVPETLN…WDILSKSFQV (442 aa). The active-site For EPSP synthase activity is Cys823. Residues 863–1055 form a shikimate kinase region; that stretch reads DKSIFIIGMR…RNKPQSFFVS (193 aa). 870–877 is an ATP binding site; that stretch reads GMRGAGKT. The interval 1056–1276 is 3-dehydroquinase; it reads LTMPDISGAA…AAPGQLSAAE (221 aa). The active-site Proton acceptor; for 3-dehydroquinate dehydratase activity is the His1179. The active-site Schiff-base intermediate with substrate; for 3-dehydroquinate dehydratase activity is Lys1207. Positions 1289–1576 are shikimate dehydrogenase; that stretch reads PKSFYLFGTP…RAAVMGDSTA (288 aa).

The protein in the N-terminal section; belongs to the sugar phosphate cyclases superfamily. Dehydroquinate synthase family. This sequence in the 2nd section; belongs to the EPSP synthase family. It in the 3rd section; belongs to the shikimate kinase family. In the 4th section; belongs to the type-I 3-dehydroquinase family. The protein in the C-terminal section; belongs to the shikimate dehydrogenase family. In terms of assembly, homodimer. Requires Zn(2+) as cofactor.

The protein localises to the cytoplasm. It catalyses the reaction 7-phospho-2-dehydro-3-deoxy-D-arabino-heptonate = 3-dehydroquinate + phosphate. The enzyme catalyses 3-dehydroquinate = 3-dehydroshikimate + H2O. The catalysed reaction is shikimate + NADP(+) = 3-dehydroshikimate + NADPH + H(+). It carries out the reaction shikimate + ATP = 3-phosphoshikimate + ADP + H(+). It catalyses the reaction 3-phosphoshikimate + phosphoenolpyruvate = 5-O-(1-carboxyvinyl)-3-phosphoshikimate + phosphate. The protein operates within metabolic intermediate biosynthesis; chorismate biosynthesis; chorismate from D-erythrose 4-phosphate and phosphoenolpyruvate: step 2/7. It participates in metabolic intermediate biosynthesis; chorismate biosynthesis; chorismate from D-erythrose 4-phosphate and phosphoenolpyruvate: step 3/7. It functions in the pathway metabolic intermediate biosynthesis; chorismate biosynthesis; chorismate from D-erythrose 4-phosphate and phosphoenolpyruvate: step 4/7. Its pathway is metabolic intermediate biosynthesis; chorismate biosynthesis; chorismate from D-erythrose 4-phosphate and phosphoenolpyruvate: step 5/7. The protein operates within metabolic intermediate biosynthesis; chorismate biosynthesis; chorismate from D-erythrose 4-phosphate and phosphoenolpyruvate: step 6/7. Functionally, the AROM polypeptide catalyzes 5 consecutive enzymatic reactions in prechorismate polyaromatic amino acid biosynthesis. This chain is Pentafunctional AROM polypeptide, found in Sclerotinia sclerotiorum (strain ATCC 18683 / 1980 / Ss-1) (White mold).